A 156-amino-acid chain; its full sequence is Cyanate hydratase (156 aa).

Catalysis depends on residues Arg-96, Glu-99, and Ser-122.

This sequence belongs to the cyanase family.

It carries out the reaction cyanate + hydrogencarbonate + 3 H(+) = NH4(+) + 2 CO2. Its function is as follows. Catalyzes the reaction of cyanate with bicarbonate to produce ammonia and carbon dioxide. The chain is Cyanate hydratase from Pseudomonas putida (strain W619).